The following is a 116-amino-acid chain: Small ribosomal subunit protein bS16 (116 aa).

It belongs to the bacterial ribosomal protein bS16 family.

This is Small ribosomal subunit protein bS16 from Chlamydia muridarum (strain MoPn / Nigg).